A 202-amino-acid chain; its full sequence is GTP cyclohydrolase 1 (202 aa).

Positions 93, 96, and 164 each coordinate Zn(2+).

Belongs to the GTP cyclohydrolase I family. Toroid-shaped homodecamer, composed of two pentamers of five dimers.

It carries out the reaction GTP + H2O = 7,8-dihydroneopterin 3'-triphosphate + formate + H(+). It participates in cofactor biosynthesis; 7,8-dihydroneopterin triphosphate biosynthesis; 7,8-dihydroneopterin triphosphate from GTP: step 1/1. The sequence is that of GTP cyclohydrolase 1 from Pelagibacter ubique (strain HTCC1062).